The chain runs to 96 residues: DNA-binding protein HmvA (96 aa).

Residues Lys-52 to Lys-55 form an interaction with DNA region.

This sequence belongs to the archaeal histone HMF family. As to quaternary structure, homodimer. Dimers then assemble into higher oligomers, with the DNA wrapped around the protein core.

The protein localises to the cytoplasm. It localises to the chromosome. Its function is as follows. Binds and compact DNA (95 to 150 base pairs) to form nucleosome-like structures that contain positive DNA supercoils. Increases the resistance of DNA to thermal denaturation (in vitro). This is DNA-binding protein HmvA (hmvA) from Methanocaldococcus jannaschii (strain ATCC 43067 / DSM 2661 / JAL-1 / JCM 10045 / NBRC 100440) (Methanococcus jannaschii).